Here is a 338-residue protein sequence, read N- to C-terminus: Elongation factor Ts, mitochondrial (338 aa).

The N-terminal 42 residues, 1-42, are a transit peptide targeting the mitochondrion; that stretch reads MSPSIAMFTLTPNARALASKTSKMDLIKNLRERTGAPIVDVK.

The protein belongs to the EF-Ts family.

Its subcellular location is the mitochondrion. In terms of biological role, associates with the EF-Tu.GDP complex and induces the exchange of GDP to GTP. It remains bound to the aminoacyl-tRNA.EF-Tu.GTP complex up to the GTP hydrolysis stage on the ribosome. The sequence is that of Elongation factor Ts, mitochondrial from Ostreococcus tauri.